Reading from the N-terminus, the 303-residue chain is Inner kinetochore subunit mal2 (303 aa).

This sequence belongs to the CENP-O/MCM21 family. As to quaternary structure, component of the heterotetrameric kinetochore subcomplex COMA, which consists of fta2, fta7, mal2 and mis17. The COMA subcomplex is part of a larger constitutive centromere-associated network (CCAN) (also known as central kinetochore Sim4 complex in fission yeast), which is composed of at least cnl2, cnp3, cnp20, fta1, fta2, fta3, fta4, fta6, fta7, mal2, mhf1, mhf2, mis6, mis15, mis17, sim4 and wip1.

It localises to the nucleus. Its subcellular location is the chromosome. The protein localises to the centromere. The protein resides in the kinetochore. Component of the kinetochore, a multiprotein complex that assembles on centromeric DNA and attaches chromosomes to spindle microtubules, mediating chromosome segregation and sister chromatid segregation during meiosis and mitosis. Component of the inner kinetochore COMA complex, which connects centromere-associated proteins and the outer kinetochore. COMA interacts with other inner kinetochore proteins to form the inner kinetochore constitutive centromere-associated network (CCAN), which serves as a structural platform for outer kinetochore assembly. The protein is Inner kinetochore subunit mal2 (mal2) of Schizosaccharomyces pombe (strain 972 / ATCC 24843) (Fission yeast).